Consider the following 652-residue polypeptide: Potassium voltage-gated channel subfamily KQT member 1 (652 aa).

Residues 1–110 are Cytoplasmic-facing; sequence MSSEQPAWTF…YNFLERPTGW (110 aa). A helical transmembrane segment spans residues 111–132; it reads KCFVYHFTVFLIVLICLIFSVL. Over 133–143 the chain is Extracellular; sequence STIQQYNNLAT. A helical transmembrane segment spans residues 144–166; it reads ETLFWMEIVLVVFFGAEYVVRLW. Topologically, residues 167–182 are cytoplasmic; sequence SAGCRSKYVGVWGRLR. A helical transmembrane segment spans residues 183–208; that stretch reads FARKPISVIDLIVVVASVIVLCVGSN. Residues 209–216 lie on the Extracellular side of the membrane; the sequence is GQVFATSA. The helical; Voltage-sensor transmembrane segment at 217 to 232 threads the bilayer; it reads IRGIRFLQILRMLHVD. The interval 228–236 is interaction with KCNE3; it reads MLHVDRQGG. At 233-250 the chain is on the cytoplasmic side; that stretch reads RQGGTWRLLGSVVFIHRQ. Gln234 provides a ligand contact to a 1,2-diacyl-sn-glycero-3-phospho-(1D-myo-inositol-4,5-bisphosphate). Residues 251 to 273 traverse the membrane as a helical segment; that stretch reads ELITTLYIGFLGLIFSSYFVYLA. The Extracellular portion of the chain corresponds to 274 to 289; that stretch reads EKDAIDSSGEYQFGSY. An intramembrane region (pore-forming) is located at residues 290–310; that stretch reads ADALWWGVVTVTTIGYGDKVP. Residues 311–312 are Extracellular-facing; sequence QT. A helical transmembrane segment spans residues 313 to 338; sequence WIGKTIASCFSVFAISFFALPAGILG. The Cytoplasmic portion of the chain corresponds to 339–652; it reads SGFALKVQQK…VPRMTQDNIS (314 aa). The interaction with CALM stretch occupies residues 360 to 372; sequence AAASLIQTAWRCY. A disordered region spans residues 393–419; sequence HHLMSPSPKPKKSAMVKKKKIRTERDE. Over residues 401-414 the composition is skewed to basic residues; it reads KPKKSAMVKKKKIR. The interval 504-518 is interaction with CALM; calcium-dependent; the sequence is KVIRRMQYFVAKKKF. An interaction with KCNE1 C-terminus region spans residues 524–561; the sequence is PYDVRDVIEQYSQGHLNLMVRIKELQRRLDQSLGKPSL. The tract at residues 577 to 605 is interaction with AKAP9; it reads IGSRLNRVEDKVTQMDHKLNLITDMLHHL. A C-terminal assembly domain (tetramerization) region spans residues 578–609; it reads GSRLNRVEDKVTQMDHKLNLITDMLHHLLTNQ. The disordered stretch occupies residues 609–652; that stretch reads QQGSQSIRTPHRSNSLNSENHPSRNTLPTYEQLNVPRMTQDNIS.

It belongs to the potassium channel family. KQT (TC 1.A.1.15) subfamily. Kv7.1/KCNQ1 sub-subfamily. As to quaternary structure, tetramer. Heterotetramer with KCNE1; targets to the membrane raft. Interacts (via C-terminus) with CALM; forms a heterotetramer in a calcium-independent manner. Interacts with KCNE2; form a heterooligomer complex that targets to the membrane raft and leading to currents with an apparently instantaneous activation, a rapid deactivation process and a linear current-voltage relationship and decreases the amplitude of the outward current. Interacts with KCNE3; four KCNE3 molecules are bound to one KCNQ1 tetramer (4:4 KCNQ1:KCNE3 stoichiometry); alters membrane raft localization; affects KCNQ1 structure and gating properties. Interacts with KCNE4; impairs KCNQ1 localization in lipid rafts and inhibits voltage-gated potassium channel activity. Interacts with KCNE5; impairs KCNQ1 localization in lipid rafts and only conducts current upon strong and continued depolarization.

The protein localises to the cell membrane. It is found in the cytoplasmic vesicle membrane. It localises to the membrane raft. The protein resides in the endoplasmic reticulum. Its subcellular location is the basolateral cell membrane. The catalysed reaction is K(+)(in) = K(+)(out). PIP2 molecule is essential to activate KCNQ channels by inducing the coupling of the voltage-sensing domain (VSD) and the pore-forming domain (PD). Upon channel activation, PIP2 disrupts the VSD-calmodulin/CALM interactions, causing the release of CALM from the VSD which triggers the opening of the gate. Calcium potentiates KCNQ1 channel current through calcium-bound CALM. Calcium-bound CALM competes with PIP2 to stabilize the channel open state. Its function is as follows. Pore-forming subunit of the voltage-gated potassium (Kv) channel involved in the regulation of cardiomyocyte excitability and important in normal development and functions of myocardium, inner ear, stomach and colon. Associates with KCNE beta subunits that modulates current kinetics. Induces a voltage-dependent by rapidly activating and slowly deactivating potassium-selective outward current. Also promotes a delayed voltage activated potassium current showing outward rectification characteristic. During beta-adrenergic receptor stimulation participates in cardiac repolarization by associating with KCNE1 to form the I(Ks) cardiac potassium current that increases the amplitude and slows down the activation kinetics of outward potassium current I(Ks). When associated with KCNE3, forms the potassium channel that is important for cyclic AMP-stimulated intestinal secretion of chloride ions. When associated with KCNE2, forms a heterooligomer complex leading to currents with an apparently instantaneous activation, a rapid deactivation process and a linear current-voltage relationship and decreases the amplitude of the outward current. When associated with KCNE4, inhibits voltage-gated potassium channel activity. When associated with KCNE5, this complex only conducts current upon strong and continued depolarization. The polypeptide is Potassium voltage-gated channel subfamily KQT member 1 (Xenopus laevis (African clawed frog)).